The chain runs to 213 residues: ATP-dependent dethiobiotin synthetase BioD (213 aa).

Residue 12–17 (EVGKTY) participates in ATP binding. T16 is a Mg(2+) binding site. K37 is an active-site residue. ATP-binding positions include D46, 107–110 (EGVG), and 167–168 (NN). Mg(2+)-binding residues include D46 and E107.

This sequence belongs to the dethiobiotin synthetase family. Homodimer. Mg(2+) serves as cofactor.

It is found in the cytoplasm. The catalysed reaction is (7R,8S)-7,8-diammoniononanoate + CO2 + ATP = (4R,5S)-dethiobiotin + ADP + phosphate + 3 H(+). It participates in cofactor biosynthesis; biotin biosynthesis; biotin from 7,8-diaminononanoate: step 1/2. Its function is as follows. Catalyzes a mechanistically unusual reaction, the ATP-dependent insertion of CO2 between the N7 and N8 nitrogen atoms of 7,8-diaminopelargonic acid (DAPA, also called 7,8-diammoniononanoate) to form a ureido ring. In Akkermansia muciniphila (strain ATCC BAA-835 / DSM 22959 / JCM 33894 / BCRC 81048 / CCUG 64013 / CIP 107961 / Muc), this protein is ATP-dependent dethiobiotin synthetase BioD.